The sequence spans 357 residues: UPF0283 membrane protein BCAN_A1047 (357 aa).

The disordered stretch occupies residues 1–36 (MSDKTPRKPTAFRLEQPARVSAASEQEEPRRPRAVK). The span at 27-36 (EEPRRPRAVK) shows a compositional bias: basic and acidic residues. 2 helical membrane passes run 78–98 (ILFGALGILVSFAIGIWTEDL) and 109–129 (LGWTALGVAMVALAAFAAIIL).

The protein belongs to the UPF0283 family.

The protein localises to the cell inner membrane. This is UPF0283 membrane protein BCAN_A1047 from Brucella canis (strain ATCC 23365 / NCTC 10854 / RM-666).